The chain runs to 121 residues: Large ribosomal subunit protein eL18 (121 aa).

This sequence belongs to the eukaryotic ribosomal protein eL18 family.

The polypeptide is Large ribosomal subunit protein eL18 (Methanothermobacter thermautotrophicus (strain ATCC 29096 / DSM 1053 / JCM 10044 / NBRC 100330 / Delta H) (Methanobacterium thermoautotrophicum)).